The sequence spans 588 residues: Succinate dehydrogenase flavoprotein subunit (588 aa).

FAD-binding positions include 14-19 (GAGGAG), 37-52 (SKVF…AQGG), and aspartate 221. Histidine 45 carries the post-translational modification Tele-8alpha-FAD histidine. Positions 242 and 254 each coordinate substrate. Residue lysine 267 is modified to N6-acetyllysine. Arginine 286 functions as the Proton acceptor in the catalytic mechanism. Histidine 354 contacts substrate. FAD is bound at residue glutamate 388. Substrate is bound at residue arginine 399. 404–405 (SL) lines the FAD pocket.

The protein belongs to the FAD-dependent oxidoreductase 2 family. FRD/SDH subfamily. As to quaternary structure, part of an enzyme complex containing four subunits: a flavoprotein, an iron-sulfur, cytochrome b-556, and a hydrophobic anchor protein. The complex forms trimers. The cofactor is FAD.

It is found in the cell inner membrane. It catalyses the reaction a quinone + succinate = fumarate + a quinol. The protein operates within carbohydrate metabolism; tricarboxylic acid cycle; fumarate from succinate (bacterial route): step 1/1. In terms of biological role, two distinct, membrane-bound, FAD-containing enzymes are responsible for the catalysis of fumarate and succinate interconversion; the fumarate reductase is used in anaerobic growth, and the succinate dehydrogenase is used in aerobic growth. This Escherichia coli O157:H7 protein is Succinate dehydrogenase flavoprotein subunit (sdhA).